A 239-amino-acid chain; its full sequence is DNA repair protein RecO (239 aa).

Belongs to the RecO family.

In terms of biological role, involved in DNA repair and RecF pathway recombination. This is DNA repair protein RecO from Bifidobacterium longum subsp. infantis (strain ATCC 15697 / DSM 20088 / JCM 1222 / NCTC 11817 / S12).